The following is a 525-amino-acid chain: GMP synthase [glutamine-hydrolyzing] (525 aa).

A Glutamine amidotransferase type-1 domain is found at 12–203; it reads TVLVVDFGAQ…LYRGAGLTPS (192 aa). The active-site Nucleophile is the Cys89. Residues His177 and Glu179 contribute to the active site. The 196-residue stretch at 204–399 folds into the GMPS ATP-PPase domain; the sequence is WTTGNVIDEQ…LGLPDEIVQR (196 aa). 231–237 is a binding site for ATP; the sequence is SGGVDSA.

Homodimer.

The enzyme catalyses XMP + L-glutamine + ATP + H2O = GMP + L-glutamate + AMP + diphosphate + 2 H(+). It participates in purine metabolism; GMP biosynthesis; GMP from XMP (L-Gln route): step 1/1. Its function is as follows. Catalyzes the synthesis of GMP from XMP. This Streptomyces avermitilis (strain ATCC 31267 / DSM 46492 / JCM 5070 / NBRC 14893 / NCIMB 12804 / NRRL 8165 / MA-4680) protein is GMP synthase [glutamine-hydrolyzing].